The primary structure comprises 405 residues: Replication factor C large subunit (405 aa).

Glycine 47 to threonine 54 is a binding site for ATP.

The protein belongs to the activator 1 small subunits family. RfcL subfamily. In terms of assembly, heteromultimer composed of small subunits (RfcS) and large subunits (RfcL).

Functionally, part of the RFC clamp loader complex which loads the PCNA sliding clamp onto DNA. The protein is Replication factor C large subunit of Saccharolobus islandicus (strain L.S.2.15 / Lassen #1) (Sulfolobus islandicus).